The sequence spans 632 residues: 1-deoxy-D-xylulose-5-phosphate synthase (632 aa).

Thiamine diphosphate is bound by residues histidine 73 and 114-116; that span reads SHA. Aspartate 146 provides a ligand contact to Mg(2+). Thiamine diphosphate contacts are provided by residues 147 to 148, asparagine 176, tyrosine 287, and glutamate 368; that span reads GA. Asparagine 176 is a binding site for Mg(2+).

Belongs to the transketolase family. DXPS subfamily. As to quaternary structure, homodimer. The cofactor is Mg(2+). It depends on thiamine diphosphate as a cofactor.

It catalyses the reaction D-glyceraldehyde 3-phosphate + pyruvate + H(+) = 1-deoxy-D-xylulose 5-phosphate + CO2. The protein operates within metabolic intermediate biosynthesis; 1-deoxy-D-xylulose 5-phosphate biosynthesis; 1-deoxy-D-xylulose 5-phosphate from D-glyceraldehyde 3-phosphate and pyruvate: step 1/1. In terms of biological role, catalyzes the acyloin condensation reaction between C atoms 2 and 3 of pyruvate and glyceraldehyde 3-phosphate to yield 1-deoxy-D-xylulose-5-phosphate (DXP). In Corynebacterium glutamicum (strain R), this protein is 1-deoxy-D-xylulose-5-phosphate synthase.